Reading from the N-terminus, the 72-residue chain is DNA-directed RNA polymerase subunit Rpo10 (72 aa).

Residues C7, C10, C54, and C55 each contribute to the Zn(2+) site.

Belongs to the archaeal Rpo10/eukaryotic RPB10 RNA polymerase subunit family. As to quaternary structure, part of the RNA polymerase complex. Requires Zn(2+) as cofactor.

Its subcellular location is the cytoplasm. It carries out the reaction RNA(n) + a ribonucleoside 5'-triphosphate = RNA(n+1) + diphosphate. In terms of biological role, DNA-dependent RNA polymerase (RNAP) catalyzes the transcription of DNA into RNA using the four ribonucleoside triphosphates as substrates. This Picrophilus torridus (strain ATCC 700027 / DSM 9790 / JCM 10055 / NBRC 100828 / KAW 2/3) protein is DNA-directed RNA polymerase subunit Rpo10.